Here is a 200-residue protein sequence, read N- to C-terminus: MAGFKQLSGLVVPLDAANVDTDAIIPKQFLQAITRVGFGKHLFHEWRYLDVDGTKPNPEFVLNYPQYQGATILLARKNLGCGSSREHAPWALADYGFKVMIAPSFADIFYNNSLNNHMLPIRLSEEEVEEIFQWVWANESKQIHVDLEAMTVTVGDKVYTFELDEFRRHCLLNGLDNIGLTLQHEDKISAYEKNIPAFLR.

The protein belongs to the LeuD family. LeuD type 1 subfamily. As to quaternary structure, heterodimer of LeuC and LeuD.

The catalysed reaction is (2R,3S)-3-isopropylmalate = (2S)-2-isopropylmalate. It functions in the pathway amino-acid biosynthesis; L-leucine biosynthesis; L-leucine from 3-methyl-2-oxobutanoate: step 2/4. In terms of biological role, catalyzes the isomerization between 2-isopropylmalate and 3-isopropylmalate, via the formation of 2-isopropylmaleate. This Haemophilus influenzae (strain PittEE) protein is 3-isopropylmalate dehydratase small subunit.